Here is a 71-residue protein sequence, read N- to C-terminus: Prophage lysis protein S homolog EssD (71 aa).

This sequence belongs to the lambda phage S protein family.

The protein is Prophage lysis protein S homolog EssD (essD) of Escherichia coli (strain K12).